Reading from the N-terminus, the 947-residue chain is Plasma membrane ATPase 2 (947 aa).

Residues 1-103 are disordered; the sequence is MSSTEAKQYK…TDGVHAGQRV (103 aa). Over 1-144 the chain is Cytoplasmic; that stretch reads MSSTEAKQYK…AEENESLIVK (144 aa). The span at 7–22 shows a compositional bias: basic and acidic residues; the sequence is KQYKEKPSKEYLHASD. Residues 26 to 61 are compositionally biased toward low complexity; it reads PANNSAASSSSSSSTSTSASSSAAAVPRKAAAASAA. Residues 62–74 show a composition bias toward acidic residues; that stretch reads DDSDSDEDIDQLI. A helical transmembrane segment spans residues 145–165; it reads FLMFFVGPIQFVMEAAAILAA. The Extracellular portion of the chain corresponds to 166–169; it reads GLSD. A helical membrane pass occupies residues 170 to 189; the sequence is WVDVGVICALLLLNASVGFI. At 190–320 the chain is on the cytoplasmic side; it reads QEFQAGSIVD…VEGHFTEVLN (131 aa). Residues 321–342 form a helical membrane-spanning segment; the sequence is GIGIILLVLVIATLLLVWTACF. Topologically, residues 343-353 are extracellular; that stretch reads YRTVGIVSILR. The helical transmembrane segment at 354-376 threads the bilayer; sequence YTLGITIIGVPVGLPAVVTTTMA. Residues 377–748 are Cytoplasmic-facing; the sequence is VGAAYLAKKQ…IAILNNSLDI (372 aa). Asp407 acts as the 4-aspartylphosphate intermediate in catalysis. The Mg(2+) site is built by Asp663 and Asp667. The helical transmembrane segment at 749–767 threads the bilayer; the sequence is NLIVFIAIFADVATLTIAY. Residues 768–783 lie on the Extracellular side of the membrane; it reads DNAPYAPEPVKWNLPR. The chain crosses the membrane as a helical span at residues 784-803; sequence LWGMSIILGIVLAIGSWITL. Topologically, residues 804–853 are cytoplasmic; sequence TTMFLPNGGIIQNFGAMNGVMFLQISLTENWLIFVTRAAGPFWSSIPSWQ. Residues 854 to 874 traverse the membrane as a helical segment; it reads LAGAVFAVDIIATMFTLFGWW. The Extracellular segment spans residues 875–886; that stretch reads SENWTDIVSVVR. The chain crosses the membrane as a helical span at residues 887 to 903; the sequence is VWIWSIGIFCVLGGFYY. Over 904–947 the chain is Cytoplasmic; the sequence is IMSTSQAFDRLMNGKSLKEKKSTRSVEDFMAAMQRVSTQHEKSS.

The protein belongs to the cation transport ATPase (P-type) (TC 3.A.3) family. Type IIIA subfamily.

Its subcellular location is the cell membrane. The enzyme catalyses ATP + H2O + H(+)(in) = ADP + phosphate + 2 H(+)(out). In terms of biological role, the plasma membrane ATPase of plants and fungi is a hydrogen ion pump. The proton gradient it generates drives the active transport of nutrients by H(+)-symport. The resulting external acidification and/or internal alkinization may mediate growth responses. This Saccharomyces cerevisiae (strain ATCC 204508 / S288c) (Baker's yeast) protein is Plasma membrane ATPase 2 (PMA2).